We begin with the raw amino-acid sequence, 1096 residues long: MGSSIKINSISIDLAGAANEIDMVKCDHFSMRGFVAETRERDLRKCWPFSEESVSLVDQQSYTLPTLSVPKFRWWHCMSCIKDIDAHGPKDCGLHSNSKAIGNSSVIESKSKFNSLTIIDHEKEKKTDIADNAIEEKVGVNCENDDQTATTFLKKARGRPMGASNVRSKSRKLVSPEQVGNNRSKEKLNKPSMDISSWKEKQNVDQAVTTFGSSEIAGVVEDTPPKATKNHKGIRGLMECDNGSSESINLAMSGLQRRKSRKVRLLSELLGNTKTSGGSNIRKEESALKKESVRGRKRKLLPENNYVSRILSTMGATSENASKSCDSDQGNSESTDSGFDRTPFKGKQRNRRFQVVDEFVPSLPCETSQEGIKEHDADPSKRSTPAHSLFTGNDSVPCPPGTQRTERKLSLPKKKTKKPVIDNGKSTVISFSNGIDGSQVNSHTGPSMNTVSQTRDLLNGKRVGGLFDNRLASDGYFRKYLSQVNDKPITSLHLQDNDYVRSRDAEPNCLRDFSSSSKSSSGGWLRTGVDIVDFRNNNHNTNRSSFSNLKLRYPPSSTEVADLSRVLQKDASGADRKGKTVMVQEHHGAPRSQSHDRKETTTEEQNNDDIPMEIVELMAKNQYERCLPDKEEDVSNKQPSQETAHKSKNALLIDLNETYDNGISLEDNNTSRPPKPCSSNARREEHFPMGRQQNSHDFFPISQPYVPSPFGIFPPTQENRASSIRFSGHNCQWLGNLPTVGNQNPSPSSFRVLRACDTCQSVPNQYREASHPIWPSSMIPPQSQYKPVSLNINQSTNPGTLSQASNNENTWNLNFVAANGKQKCGPNPEFSFGCKHAAGVSSSSSRPIDNFSSESSIPALHLLSLLDPRLRSTTPADQHGNTKFTKRHFPPANQSKEFIELQTGDSSKSAYSTKQIPFDLYSKRFTQEPSRKSFPITPPIGTSSLSFQNASWSPHHQEKKTKRKDTFAPVYNTHEKPVFASSNDQAKFQLLGASNSMMLPLKFHMTDKEKKQKRKAESCNNNASAGPVKNSSGPIVCSVNRNPADFTIPEPGNVYMLTGEHLKVRKRTTFKKKPAVCKQDAMKQTKKPVCPPTQNA.

Disordered stretches follow at residues 155–189 (KARG…EKLN), 274–296 (KTSG…VRGR), 315–348 (GATS…KGKQ), 366–420 (ETSQ…KKPV), 563–612 (LSRV…DIPM), 629–651 (DKEE…KNAL), 1007–1032 (DKEK…KNSS), and 1070–1096 (FKKK…TQNA). 2 short sequence motifs (nuclear localization signal) span residues 170–177 (SRKLVSPE) and 281–288 (IRKEESAL). Positions 281–294 (IRKEESALKKESVR) are enriched in basic and acidic residues. A compositionally biased stretch (polar residues) spans 315–337 (GATSENASKSCDSDQGNSESTDS). The DNA-binding stretch occupies residues 337-617 (SGFDRTPFKG…DDIPMEIVEL (281 aa)). Basic and acidic residues predominate over residues 371 to 381 (GIKEHDADPSK). Residues 382-394 (RSTPAHSLFTGND) show a composition bias toward polar residues. Positions 572 to 601 (SGADRKGKTVMVQEHHGAPRSQSHDRKETT) are enriched in basic and acidic residues. The interval 866-1096 (LDPRLRSTTP…KPVCPPTQNA (231 aa)) is DNA-binding. The segment covering 1018–1032 (SCNNNASAGPVKNSS) has biased composition (polar residues). Positions 1071–1078 (KKKPAVCK) match the Nuclear localization signal 3 motif.

In terms of assembly, interacts with MSI1. Expressed in mature embryo, root tips, cotyledons, leaves, stems, shoot apex, and flower clusters, with highest levels in flowers. The presence in the shoot apical meristem (SAM) is required to maintain vegetative development and prevent early flowering.

The protein resides in the nucleus. Transcription repressor that regulates phase transition during shoot, flower and seeds development. Controls leaves development, shoot architecture and flowering by delaying both the vegetative to reproductive transition and flower initiation. Participates in polycomb group (PcG) protein complex-mediated (including EMF2) silencing of the flower homeotic genes AGAMOUS (AG), PISTILLATA (PI), and APETALA3 (AP3), as well as of some regulatory genes such as ABSCISIC ACID INSENSITIVE3 (ABI3), LONG VEGETATIVE PHASE1 (LOV1), and FLOWERING LOCUS C (FLC) during vegetative development. Required for histone methylation or for maintaining a stable histone methylation (e.g. H3K27me3) pattern of repressed target genes (including genes involved in salt stress response and flower development); this repression is counteracted by ULT1. Can bind non specifically DNA (both double- and single-stranded) and RNA. This chain is Protein EMBRYONIC FLOWER 1, found in Arabidopsis thaliana (Mouse-ear cress).